Consider the following 413-residue polypeptide: Serine--tRNA ligase (413 aa).

221–223 (TAE) provides a ligand contact to L-serine. An ATP-binding site is contributed by 252–254 (RRE). E275 contacts L-serine. 339-342 (EVSS) is a binding site for ATP. S375 is an L-serine binding site.

This sequence belongs to the class-II aminoacyl-tRNA synthetase family. Type-1 seryl-tRNA synthetase subfamily. Homodimer. The tRNA molecule binds across the dimer.

It localises to the cytoplasm. It carries out the reaction tRNA(Ser) + L-serine + ATP = L-seryl-tRNA(Ser) + AMP + diphosphate + H(+). It catalyses the reaction tRNA(Sec) + L-serine + ATP = L-seryl-tRNA(Sec) + AMP + diphosphate + H(+). It participates in aminoacyl-tRNA biosynthesis; selenocysteinyl-tRNA(Sec) biosynthesis; L-seryl-tRNA(Sec) from L-serine and tRNA(Sec): step 1/1. Catalyzes the attachment of serine to tRNA(Ser). Is also able to aminoacylate tRNA(Sec) with serine, to form the misacylated tRNA L-seryl-tRNA(Sec), which will be further converted into selenocysteinyl-tRNA(Sec). The sequence is that of Serine--tRNA ligase from Dehalococcoides mccartyi (strain ATCC BAA-2266 / KCTC 15142 / 195) (Dehalococcoides ethenogenes (strain 195)).